We begin with the raw amino-acid sequence, 130 residues long: Holin-like protein CidA (130 aa).

Helical transmembrane passes span 6–26 (FVIKLILQLALIMLITFIGTE), 31–51 (LHIPLAGSIVGLMLFFLLLQF), 65–85 (FLLKTMVFFFIPSVVGIMDVA), and 93–113 (ILFFIVIIIGTCLVALSSGYI).

It belongs to the CidA/LrgA family. CidA subfamily.

It localises to the cell membrane. Increases the activity of extracellular murein hydrolases possibly by mediating their export via hole formation. Inhibited by the antiholin-like proteins LrgAB. In an unstressed cell, the LrgAB products probably inhibit the function of the CidAB proteins. When a cell is stressed by the addition of antibiotics or by other factors in the environment, the CidAB proteins possibly oligomerize within the bacterial cell membrane, creating lesions that disrupt the proton motive force, which in turn results in loss of cell viability. These lesions are also hypothesized to regulate the subsequent cell lysis by either allowing the murein hydrolases access to the cell wall substrate and/or regulating their activity by a possible change in the cell wall pH that results from loss of membrane potential. This is Holin-like protein CidA from Staphylococcus epidermidis (strain ATCC 35984 / DSM 28319 / BCRC 17069 / CCUG 31568 / BM 3577 / RP62A).